Reading from the N-terminus, the 1020-residue chain is Neurofilament heavy polypeptide (1020 aa).

Residues 1-100 are head; that stretch reads MMSFGGADAL…VATSRSEKEQ (100 aa). A disordered region spans residues 58–83; sequence VSASPSRFRGAGAASSTDSLDTLSNG. Polar residues predominate over residues 71–82; sequence ASSTDSLDTLSN. 2 positions are modified to phosphoserine: serine 76 and serine 124. The IF rod domain occupies 97–413; the sequence is EKEQLQALND…KLLEGEECRI (317 aa). The coil 1A stretch occupies residues 101–132; sequence LQALNDRFAGYIDKVRQLEAHNRSLEGEAAAL. The linker 1 stretch occupies residues 133–145; it reads RQQQAGRSAMGEL. Residues 146 to 244 are coil 1B; that stretch reads YEREVREMRG…QEEVGELLGQ (99 aa). A linker 12 region spans residues 245-266; it reads IQGSGAAQAQMQAETRDALKCD. The coil 2A stretch occupies residues 267–288; it reads VTSALREIRAQLEGHAVQSTLQ. The segment at 289–292 is linker 2; sequence SEEW. The segment at 293-413 is coil 2B; it reads FRVRLDRLSE…KLLEGEECRI (121 aa). Phosphoserine is present on residues serine 347 and serine 421. Residues 414-1020 are tail; the sequence is GFGPIPFSLP…ATEDKAAKGK (607 aa). A disordered region spans residues 456-1020; it reads IVEEQTEETQ…ATEDKAAKGK (565 aa). Composition is skewed to acidic residues over residues 459-475 and 483-498; these read EQTE…EEEE and GKEE…EGGE. Phosphoserine occurs at positions 511, 526, 532, 540, 546, 552, 560, 566, 574, 580, 586, 594, 600, 606, 614, 620, 628, 634, 640, 648, 654, 662, 668, 676, 682, 690, 696, and 704. The segment covering 511 to 1020 has biased composition (basic and acidic residues); sequence SPEKEAKSPV…ATEDKAAKGK (510 aa). Tandem repeats lie at residues 525 to 530, 531 to 536, 539 to 544, and 545 to 550. Positions 525-826 are 30 X 6 AA repeats of K-S-P-[AEPV]-[EAK]-[AEVK]; the sequence is KSPAEAKSPE…KEEVKSPVKE (302 aa). Repeat 5 spans residues 559–564; the sequence is KSPPEA. Tandem repeats lie at residues 573–578 and 579–584. A run of 2 repeats spans residues 593–598 and 599–604. Repeat 10 spans residues 613–618; that stretch reads KSPAEA. 4 repeat units span residues 627–632, 633–638, 639–644, and 647–652. A run of 12 repeats spans residues 661 to 666, 667 to 672, 675 to 680, 681 to 686, 689 to 694, 695 to 700, 703 to 708, 709 to 714, 717 to 722, 723 to 728, 737 to 742, and 745 to 750. A phosphoserine mark is found at serine 718, serine 724, and serine 738. 2 positions are modified to phosphoserine: serine 752 and serine 763. The stretch at 762-767 is repeat 27; that stretch reads KSPEAK. At threonine 768 the chain carries Phosphothreonine. 3 repeat units span residues 786–791, 794–799, and 821–826. Phosphoserine is present on residues serine 787, serine 795, serine 822, and serine 888.

Belongs to the intermediate filament family. Forms heterodimers with NEFL; which can further hetero-oligomerize (in vitro). Forms heterodimers with INA (in vitro). There are a number of repeats of the tripeptide K-S-P, NFH is phosphorylated on a number of the serines in this motif. It is thought that phosphorylation of NFH results in the formation of interfilament cross bridges that are important in the maintenance of axonal caliber. In terms of processing, phosphorylation seems to play a major role in the functioning of the larger neurofilament polypeptides (NF-M and NF-H), the levels of phosphorylation being altered developmentally and coincidentally with a change in the neurofilament function. Post-translationally, phosphorylated in the head and rod regions by the PKC kinase PKN1, leading to the inhibition of polymerization.

It is found in the cytoplasm. Its subcellular location is the cytoskeleton. The protein localises to the cell projection. The protein resides in the axon. Neurofilaments usually contain three intermediate filament proteins: NEFL, NEFM, and NEFH which are involved in the maintenance of neuronal caliber. NEFH has an important function in mature axons that is not subserved by the two smaller NF proteins. May additionally cooperate with the neuronal intermediate filament proteins PRPH and INA to form neuronal filamentous networks. This Homo sapiens (Human) protein is Neurofilament heavy polypeptide (NEFH).